The chain runs to 291 residues: MKDYLVKALAFNGEVRAYSVRTTNTVSEAQKRHDTWRTASAALGRSLTAGTMMGAMLKGEQKLTIKVEGNGPIGPILVDAHANGDVRGYVTNPHVDFEGTEQGKLRVYQAVGTEGFVTVIKDIGMREPFIGQSPIVSGELGEDFTYYFAVSEQTPSSVGVGVLVNGDDSVLAAGGFILQIMPGAQEETISFIEERLQQIPPVSQLIEQGLSPEELLYEVLGEDKVKVLETMDVQFNCTCSRERIESVLISLGKAELEQIRAEEEETEVHCHFCNERHKFAKEDITSLIEKL.

Cystine bridges form between Cys-237-Cys-239 and Cys-270-Cys-273.

It belongs to the HSP33 family. Under oxidizing conditions two disulfide bonds are formed involving the reactive cysteines. Under reducing conditions zinc is bound to the reactive cysteines and the protein is inactive.

The protein localises to the cytoplasm. In terms of biological role, redox regulated molecular chaperone. Protects both thermally unfolding and oxidatively damaged proteins from irreversible aggregation. Plays an important role in the bacterial defense system toward oxidative stress. This chain is 33 kDa chaperonin, found in Bacillus mycoides (strain KBAB4) (Bacillus weihenstephanensis).